The sequence spans 65 residues: Large ribosomal subunit protein uL29 (65 aa).

The protein belongs to the universal ribosomal protein uL29 family.

The sequence is that of Large ribosomal subunit protein uL29 (rpmC) from Buchnera aphidicola subsp. Acyrthosiphon pisum (strain APS) (Acyrthosiphon pisum symbiotic bacterium).